A 266-amino-acid chain; its full sequence is Pyrrolizixenacetamide deacetylase (266 aa).

Thr-28 lines the acetate pocket. Ser-94 acts as the Nucleophile in catalysis. Leu-95 lines the acetate pocket. Residues Asp-215 and His-242 each act as charge relay system in the active site. His-242 is an acetate binding site.

This sequence belongs to the AB hydrolase superfamily. As to quaternary structure, homodimer.

It catalyses the reaction pyrrolizixenacetamide + H2O = 3-amino-5,6,7,7a-tetrahydro-1H-pyrrolizin-1-one + acetate + H(+). In terms of biological role, involved in the biosynthetic pathway of pyrrolizwilline, a pyrrolizidine alkaloid. Catalyzes the N-deacetylation of pyrrolizixenacetamide. In Xenorhabdus hominickii, this protein is Pyrrolizixenacetamide deacetylase.